The sequence spans 230 residues: uncharacterized protein (230 aa).

A disordered region spans residues 1–57 (MPGPHSPNPGVGTNGPAPYPEPSSHEPQALDYPHDLGAAEPAFAPGPADDAALPPAA). Positions 38–55 (AAEPAFAPGPADDAALPP) are enriched in low complexity. The chain crosses the membrane as a helical span at residues 75–95 (LLIGIVVALALVSAMTAAIIY).

The protein localises to the membrane. This is an uncharacterized protein from Mycobacterium tuberculosis (strain CDC 1551 / Oshkosh).